A 79-amino-acid chain; its full sequence is uncharacterized protein (79 aa).

The N-terminal stretch at 1 to 24 (MNKFLNLIGLAFVLVLCAFSCSNA) is a signal peptide. Positions 32 to 78 (SWHVAQKGYTCYDMATSCKVTLDQFMRTNKLDNNACKLVQIGRKYCC) constitute a LysM domain.

It localises to the secreted. This is an uncharacterized protein from Dictyostelium discoideum (Social amoeba).